Consider the following 131-residue polypeptide: Arsenate reductase 2 (131 aa).

Residues Cys-10, Cys-82, and Cys-89 each act as nucleophile in the active site. Cystine bridges form between Cys-10-Cys-82 and Cys-82-Cys-89.

This sequence belongs to the low molecular weight phosphotyrosine protein phosphatase family. Thioredoxin-coupled ArsC subfamily.

It is found in the cytoplasm. It catalyses the reaction arsenate + [thioredoxin]-dithiol + H(+) = arsenite + [thioredoxin]-disulfide + H2O. In terms of biological role, catalyzes the reduction of arsenate [As(V)] to arsenite [As(III)]. This Staphylococcus haemolyticus (strain JCSC1435) protein is Arsenate reductase 2.